Consider the following 407-residue polypeptide: Na(+)-translocating NADH-quinone reductase subunit F (407 aa).

The helical transmembrane segment at 6-26 threads the bilayer; that stretch reads IFLAIGMFTAIVLGLVAIILV. Positions 35–127 constitute a 2Fe-2S ferredoxin-type domain; the sequence is GDVTIQINGE…DMQIRVPEEV (93 aa). [2Fe-2S] cluster contacts are provided by C70, C76, C79, and C111. One can recognise an FAD-binding FR-type domain in the interval 130 to 269; that stretch reads VKKWECTVES…YGPFGEFFAK (140 aa). The catalytic stretch occupies residues 272–389; sequence EAEMVFIGGG…PMMNAAVIKM (118 aa).

This sequence belongs to the NqrF family. Composed of six subunits; NqrA, NqrB, NqrC, NqrD, NqrE and NqrF. [2Fe-2S] cluster is required as a cofactor. Requires FAD as cofactor.

Its subcellular location is the cell inner membrane. The catalysed reaction is a ubiquinone + n Na(+)(in) + NADH + H(+) = a ubiquinol + n Na(+)(out) + NAD(+). Its function is as follows. NQR complex catalyzes the reduction of ubiquinone-1 to ubiquinol by two successive reactions, coupled with the transport of Na(+) ions from the cytoplasm to the periplasm. The first step is catalyzed by NqrF, which accepts electrons from NADH and reduces ubiquinone-1 to ubisemiquinone by a one-electron transfer pathway. The sequence is that of Na(+)-translocating NADH-quinone reductase subunit F from Pseudomonas aeruginosa (strain ATCC 15692 / DSM 22644 / CIP 104116 / JCM 14847 / LMG 12228 / 1C / PRS 101 / PAO1).